We begin with the raw amino-acid sequence, 311 residues long: Olfactory receptor 10G7 (311 aa).

The Extracellular portion of the chain corresponds to 1–23 (MSNATLLTAFILTGLPHAPGLDA). N3 carries N-linked (GlcNAc...) asparagine glycosylation. The chain crosses the membrane as a helical span at residues 24–44 (PLFGIFLVVYVLTVLGNLLIL). At 45 to 52 (LVIRVDSH) the chain is on the cytoplasmic side. Residues 53-73 (LHTPMYYFLTNLSFIDMWFST) traverse the membrane as a helical segment. The Extracellular segment spans residues 74 to 98 (VTVPKMLMTLVSPSGRTISFHSCVA). C96 and C188 form a disulfide bridge. Residues 99–119 (QLYFFHFLGSTECFLYTVMSY) traverse the membrane as a helical segment. Topologically, residues 120 to 138 (DRYLAISYPLRYTNMMTGR) are cytoplasmic. A helical membrane pass occupies residues 139–159 (SCALLATGTWLSGSLHSAVQT). The Extracellular segment spans residues 160–196 (ILTFHLPYCGPNQIQHYFCDAPPILKLACADTSANEM). Residues 197–216 (VIFVNIGLVASGCFVLIVLS) traverse the membrane as a helical segment. Residues 217 to 236 (YVSIVCSILRIRTSEGRHRA) lie on the Cytoplasmic side of the membrane. The chain crosses the membrane as a helical span at residues 237–257 (FQTCASHCIVVLCFFGPGLFI). Topologically, residues 258–268 (YLRPGSRDALH) are extracellular. A helical transmembrane segment spans residues 269–289 (GVVAVFYTTLTPLFNPVVYTL). Over 290 to 311 (RNKEVKKALLKLKNGSVFAQGE) the chain is Cytoplasmic.

It belongs to the G-protein coupled receptor 1 family.

Its subcellular location is the cell membrane. Odorant receptor. This is Olfactory receptor 10G7 (OR10G7) from Homo sapiens (Human).